The sequence spans 216 residues: Deoxyribose-phosphate aldolase (216 aa).

Residue D89 is the Proton donor/acceptor of the active site. K153 acts as the Schiff-base intermediate with acetaldehyde in catalysis. K182 (proton donor/acceptor) is an active-site residue.

This sequence belongs to the DeoC/FbaB aldolase family. DeoC type 1 subfamily.

The protein resides in the cytoplasm. The catalysed reaction is 2-deoxy-D-ribose 5-phosphate = D-glyceraldehyde 3-phosphate + acetaldehyde. The protein operates within carbohydrate degradation; 2-deoxy-D-ribose 1-phosphate degradation; D-glyceraldehyde 3-phosphate and acetaldehyde from 2-deoxy-alpha-D-ribose 1-phosphate: step 2/2. Its function is as follows. Catalyzes a reversible aldol reaction between acetaldehyde and D-glyceraldehyde 3-phosphate to generate 2-deoxy-D-ribose 5-phosphate. The sequence is that of Deoxyribose-phosphate aldolase from Treponema denticola (strain ATCC 35405 / DSM 14222 / CIP 103919 / JCM 8153 / KCTC 15104).